The primary structure comprises 315 residues: Probable cell division protein WhiA (315 aa).

Positions 275 to 309 (NLKELGEMVPSGVVSKSGINHRLRKINEIADKIRE) form a DNA-binding region, H-T-H motif.

Belongs to the WhiA family.

Functionally, involved in cell division and chromosome segregation. The chain is Probable cell division protein WhiA from Brevibacillus brevis (strain 47 / JCM 6285 / NBRC 100599).